A 335-amino-acid polypeptide reads, in one-letter code: Glycerol-3-phosphate dehydrogenase [NAD(P)+] (335 aa).

NADPH is bound by residues Ser-12, Trp-13, His-33, Arg-34, and Lys-108. Residues Lys-108, Gly-137, and Thr-139 each coordinate sn-glycerol 3-phosphate. Ala-141 lines the NADPH pocket. Residues Lys-192, Asp-245, Ser-255, Arg-256, and Asn-257 each contribute to the sn-glycerol 3-phosphate site. The active-site Proton acceptor is Lys-192. Arg-256 serves as a coordination point for NADPH. Glu-282 provides a ligand contact to NADPH.

Belongs to the NAD-dependent glycerol-3-phosphate dehydrogenase family.

The protein resides in the cytoplasm. It catalyses the reaction sn-glycerol 3-phosphate + NAD(+) = dihydroxyacetone phosphate + NADH + H(+). The enzyme catalyses sn-glycerol 3-phosphate + NADP(+) = dihydroxyacetone phosphate + NADPH + H(+). Its pathway is membrane lipid metabolism; glycerophospholipid metabolism. Its function is as follows. Catalyzes the reduction of the glycolytic intermediate dihydroxyacetone phosphate (DHAP) to sn-glycerol 3-phosphate (G3P), the key precursor for phospholipid synthesis. The polypeptide is Glycerol-3-phosphate dehydrogenase [NAD(P)+] (Methylococcus capsulatus (strain ATCC 33009 / NCIMB 11132 / Bath)).